A 156-amino-acid polypeptide reads, in one-letter code: 17.7 kDa class II heat shock protein (156 aa).

The region spanning 39-156 (DAKAMAATPA…KPKTIQVQVA (118 aa)) is the sHSP domain.

It belongs to the small heat shock protein (HSP20) family. In terms of assembly, may form oligomeric structures.

It is found in the cytoplasm. The polypeptide is 17.7 kDa class II heat shock protein (HSP17.7) (Arabidopsis thaliana (Mouse-ear cress)).